The sequence spans 401 residues: Deoxyhypusine synthase-like protein (401 aa).

It belongs to the deoxyhypusine synthase family.

The protein is Deoxyhypusine synthase-like protein of Thermosynechococcus vestitus (strain NIES-2133 / IAM M-273 / BP-1).